Here is a 431-residue protein sequence, read N- to C-terminus: 3-phosphoshikimate 1-carboxyvinyltransferase (431 aa).

The 3-phosphoshikimate site is built by lysine 21, serine 22, and arginine 26. Lysine 21 provides a ligand contact to phosphoenolpyruvate. Positions 93 and 121 each coordinate phosphoenolpyruvate. Residues serine 166, glutamine 168, serine 192, aspartate 317, and lysine 344 each coordinate 3-phosphoshikimate. Residue glutamine 168 participates in phosphoenolpyruvate binding. The active-site Proton acceptor is aspartate 317. 2 residues coordinate phosphoenolpyruvate: arginine 348 and arginine 390.

Belongs to the EPSP synthase family. In terms of assembly, monomer.

It localises to the cytoplasm. It catalyses the reaction 3-phosphoshikimate + phosphoenolpyruvate = 5-O-(1-carboxyvinyl)-3-phosphoshikimate + phosphate. It functions in the pathway metabolic intermediate biosynthesis; chorismate biosynthesis; chorismate from D-erythrose 4-phosphate and phosphoenolpyruvate: step 6/7. Its function is as follows. Catalyzes the transfer of the enolpyruvyl moiety of phosphoenolpyruvate (PEP) to the 5-hydroxyl of shikimate-3-phosphate (S3P) to produce enolpyruvyl shikimate-3-phosphate and inorganic phosphate. In Herpetosiphon aurantiacus (strain ATCC 23779 / DSM 785 / 114-95), this protein is 3-phosphoshikimate 1-carboxyvinyltransferase.